A 368-amino-acid chain; its full sequence is Epoxyqueuosine reductase QueH (368 aa).

Residues Cys6, Cys7, Cys87, and Cys90 each coordinate [4Fe-4S] cluster. Cys174 and Cys176 are disulfide-bonded.

The protein belongs to the QueH family.

The catalysed reaction is epoxyqueuosine(34) in tRNA + AH2 = queuosine(34) in tRNA + A + H2O. It functions in the pathway tRNA modification; tRNA-queuosine biosynthesis. Functionally, catalyzes the conversion of epoxyqueuosine (oQ) to queuosine (Q), which is a hypermodified base found in the wobble positions of tRNA(Asp), tRNA(Asn), tRNA(His) and tRNA(Tyr). In Helicobacter pylori (strain ATCC 700392 / 26695) (Campylobacter pylori), this protein is Epoxyqueuosine reductase QueH.